An 88-amino-acid polypeptide reads, in one-letter code: Translation initiation factor IF-1 3 (88 aa).

The region spanning 1–72 (MAKEELLELD…TKGCINFRHK (72 aa)) is the S1-like domain.

Belongs to the IF-1 family. As to quaternary structure, component of the 30S ribosomal translation pre-initiation complex which assembles on the 30S ribosome in the order IF-2 and IF-3, IF-1 and N-formylmethionyl-tRNA(fMet); mRNA recruitment can occur at any time during PIC assembly.

It localises to the cytoplasm. In terms of biological role, one of the essential components for the initiation of protein synthesis. Stabilizes the binding of IF-2 and IF-3 on the 30S subunit to which N-formylmethionyl-tRNA(fMet) subsequently binds. Helps modulate mRNA selection, yielding the 30S pre-initiation complex (PIC). Upon addition of the 50S ribosomal subunit IF-1, IF-2 and IF-3 are released leaving the mature 70S translation initiation complex. The chain is Translation initiation factor IF-1 3 from Burkholderia orbicola (strain AU 1054).